Consider the following 1272-residue polypeptide: Regulator of nonsense transcripts 2 (1272 aa).

A compositionally biased stretch (basic and acidic residues) spans 1-114 (MPAERKKPAS…QEEQAKRQQE (114 aa)). 4 disordered regions span residues 1–126 (MPAE…EKEE), 370–389 (DHRE…HSKG), 423–445 (NMPD…DIFT), and 490–517 (CQNK…SPDD). Positions 54–134 (EDKKKRLEDD…EESIQLHQEA (81 aa)) form a coiled coil. A sufficient for interaction with UPF1 region spans residues 94 to 133 (KKKHQEEERKKQEEQAKRQQEEEAAAQMKEKEESIQLHQE). The MIF4G 1 domain occupies 168-431 (LKKNTAFVKK…ENMPDLPQDK (264 aa)). Basic and acidic residues-rich tracts occupy residues 428–439 (PQDKPTPEEHGP) and 490–513 (CQNK…KEVS). Positions 487-559 (EKSCQNKESN…EQEQEDEEAS (73 aa)) form a coiled coil. MIF4G domains lie at 569-758 (DAFL…CNPP) and 773-986 (EYVR…LRPK). A sufficient for interaction with UPF3A and UPF3B region spans residues 711–928 (GRFLFRSPES…IRLVCTILDT (218 aa)). Residues 757-1272 (PPPAEKTVKK…LIFKTGGRRR (516 aa)) are sufficient for interaction with EIF4A1 and EIF1. A binds to UPF3B region spans residues 839–859 (EDVGIHVVDGVLEDIRLGMEV). Positions 1018–1098 (DSKDSMTEGE…DEENTEVMIK (81 aa)) are disordered. Acidic residues predominate over residues 1027 to 1076 (ENLEEDEEEEEGGAETEEQSGNESEVNEPEEEEGSDNDDDEGEEEEEENT). The interval 1084–1272 (KENETDEENT…LIFKTGGRRR (189 aa)) is sufficient for interaction with UPF1 C-terminus. At Thr-1088 the chain carries Phosphothreonine. Interaction with UPF1 stretches follow at residues 1105–1129 (VPCV…QQRS) and 1167–1207 (DTMP…AEQE). Residues 1105–1198 (VPCVEDEDFI…PMSSQLAANH (94 aa)) are necessary for interaction with UPF1. Residues 1220–1272 (NERQEQEDYQEMLQSLAQRPAPANTNRERRPRYQHPKGAPNADLIFKTGGRRR) are disordered.

In terms of assembly, found in a post-splicing messenger ribonucleoprotein (mRNP) complex. Associates with the exon junction complex (EJC). Interacts with SMG1, EST1A, UPF1, UPF3A, UPF3B, EIF4A1 and EIF1. In terms of tissue distribution, ubiquitous.

It localises to the cytoplasm. Its subcellular location is the perinuclear region. Functionally, involved in nonsense-mediated decay (NMD) of mRNAs containing premature stop codons by associating with the nuclear exon junction complex (EJC). Recruited by UPF3B associated with the EJC core at the cytoplasmic side of the nuclear envelope and the subsequent formation of an UPF1-UPF2-UPF3 surveillance complex (including UPF1 bound to release factors at the stalled ribosome) is believed to activate NMD. In cooperation with UPF3B stimulates both ATPase and RNA helicase activities of UPF1. Binds spliced mRNA. The polypeptide is Regulator of nonsense transcripts 2 (Homo sapiens (Human)).